A 273-amino-acid chain; its full sequence is Putative cysteine-rich repeat secretory protein 40 (273 aa).

A signal peptide spans 1 to 32; the sequence is MYPSCSLLQRLVWFPFLALVATQLLFIRNVSS. 2 Gnk2-homologous domains span residues 39–141 and 151–264; these read YLHH…SISV and YENN…LYPF.

This sequence belongs to the cysteine-rich repeat secretory protein family.

The protein localises to the secreted. This chain is Putative cysteine-rich repeat secretory protein 40 (CRRSP40), found in Arabidopsis thaliana (Mouse-ear cress).